The sequence spans 529 residues: N5-hydroxyornithine acetylase sidL (529 aa).

2 disordered regions span residues 59-95 and 239-258; these read ASVN…VRPF and SPWP…SPVA. Position 462 (His462) interacts with substrate. Catalysis depends on Glu498, which acts as the Proton acceptor.

The protein belongs to the lysine N-acyltransferase mbtK family.

It is found in the cytoplasm. It localises to the cytosol. It participates in siderophore biosynthesis. Its function is as follows. Acyltransferase; part of the gene cluster that mediates the biosynthesis of at least 11 siderophores, including beauverichelin A, dimerumic acid (DA), Na-dimethyl coprogen (NADC), eleutherazine B, ferricrocin (FC), fusarinine A, fusarinine C (FsC), metachelin A, mevalonolactone, rhodotorulic acid (RA) and tenellin. This cocktail of siderophores for iron metabolism is essential for virulence, and more specifically for the fungal virulence in penetrating through the host cuticle. Siderophore synthesis is also involved in conidial germination under iron-deficient conditions. SIDL contributes to partial production of ferricrocin under iron-limiting conditions via the acetylation of N(5)-hydroxyornithine. The chain is N5-hydroxyornithine acetylase sidL from Beauveria bassiana (strain ARSEF 2860) (White muscardine disease fungus).